The chain runs to 330 residues: GTPase Obg (330 aa).

Positions 1–159 constitute an Obg domain; it reads MHFIDEVKIY…MWIHLSLKLL (159 aa). The region spanning 160–327 is the OBG-type G domain; it reads SDVGLVGLPN…IVKLALETIK (168 aa). Residues 166–173, 191–195, 212–215, 279–282, and 308–310 each bind GTP; these read GLPNAGKS, FTTLV, DIPG, NKCD, and STC. Mg(2+) is bound by residues Ser173 and Thr193.

It belongs to the TRAFAC class OBG-HflX-like GTPase superfamily. OBG GTPase family. In terms of assembly, monomer. It depends on Mg(2+) as a cofactor.

The protein resides in the cytoplasm. In terms of biological role, an essential GTPase which binds GTP, GDP and possibly (p)ppGpp with moderate affinity, with high nucleotide exchange rates and a fairly low GTP hydrolysis rate. Plays a role in control of the cell cycle, stress response, ribosome biogenesis and in those bacteria that undergo differentiation, in morphogenesis control. The polypeptide is GTPase Obg (Rickettsia conorii (strain ATCC VR-613 / Malish 7)).